Consider the following 144-residue polypeptide: Endoribonuclease YbeY (144 aa).

The Zn(2+) site is built by His-104, His-108, and His-114.

Belongs to the endoribonuclease YbeY family. The cofactor is Zn(2+).

Its subcellular location is the cytoplasm. Its function is as follows. Single strand-specific metallo-endoribonuclease involved in late-stage 70S ribosome quality control and in maturation of the 3' terminus of the 16S rRNA. The polypeptide is Endoribonuclease YbeY (Nitratiruptor sp. (strain SB155-2)).